The primary structure comprises 308 residues: MSAQKPGLHPRNRHHSRYDLATLCQVNPELRQFLTLTPAGEQSVDFANPLAVKALNKALLAHFYAVANWDIPDGFLCPPVPGRADYIHHLADLLAEASGTIPANASILDIGVGANCIYPLIGVHEYGWRFTGSETSSQALSSAQAIISANPGLNRAIRLRRQKESGAIFNGIIHKNEQYDATLCNPPFHNSATAARAGSERKRRNLGLNKDDALNFGGQQQELWCEGGEVAFIKKMIEESKGFAKQVMWFTSLVSRGENLPPLYRALTDVGAVKVVKKEMAQGQKQSRFIAWTFMNDEQRRRFVNRQR.

The protein belongs to the methyltransferase superfamily. METTL16/RlmF family.

The protein resides in the cytoplasm. It catalyses the reaction adenosine(1618) in 23S rRNA + S-adenosyl-L-methionine = N(6)-methyladenosine(1618) in 23S rRNA + S-adenosyl-L-homocysteine + H(+). In terms of biological role, specifically methylates the adenine in position 1618 of 23S rRNA. The chain is Ribosomal RNA large subunit methyltransferase F from Escherichia coli O6:H1 (strain CFT073 / ATCC 700928 / UPEC).